Consider the following 302-residue polypeptide: Recombination-associated protein RdgC (302 aa).

This sequence belongs to the RdgC family.

It is found in the cytoplasm. It localises to the nucleoid. In terms of biological role, may be involved in recombination. In Actinobacillus pleuropneumoniae serotype 3 (strain JL03), this protein is Recombination-associated protein RdgC.